Reading from the N-terminus, the 522-residue chain is Maturase K (522 aa).

This sequence belongs to the intron maturase 2 family. MatK subfamily.

Its subcellular location is the plastid. It localises to the chloroplast. Functionally, usually encoded in the trnK tRNA gene intron. Probably assists in splicing its own and other chloroplast group II introns. This Watsonia angusta protein is Maturase K.